A 267-amino-acid chain; its full sequence is uncharacterized protein (267 aa).

The stretch at 37–62 (DSSNNYKKKYKKYKRKYIDLKKQLNY) forms a coiled coil.

This is an uncharacterized protein from Acanthamoeba polyphaga (Amoeba).